A 205-amino-acid chain; its full sequence is Ephrin-A1 (205 aa).

Residues 1 to 18 form the signal peptide; that stretch reads MEFLWAPLLGLCCSLAAA. An Ephrin RBD domain is found at 19-151; sequence DRHTVFWNSS…RLKVTVSGKI (133 aa). N-linked (GlcNAc...) asparagine glycosylation is present at Asn26. 2 disulfide bridges follow: Cys51–Cys92 and Cys80–Cys140. Ser182 is lipidated: GPI-anchor amidated serine. Residues 183-205 constitute a propeptide, removed in mature form; sequence AAPRLFPLAWTVLLLPLLLLQTP.

It belongs to the ephrin family. Monomer. Homodimer. Forms heterodimers with EPHA2. Binds to the receptor tyrosine kinases EPHA2, EPHA3, EPHA4, EPHA5, EPHA6 and EPHA7. Also binds with low affinity to EPHA1. Undergoes proteolysis by a metalloprotease to give rise to a soluble monomeric form. Post-translationally, N-Glycosylation is required for binding to EPHA2 receptor and inducing its internalization. As to expression, brain. Down-regulated in primary glioma tissues compared to the normal tissues. The soluble monomeric form is expressed in the glioblastoma multiforme (GBM) and breast cancer cells (at protein level).

The protein localises to the cell membrane. The protein resides in the secreted. Its function is as follows. Cell surface GPI-bound ligand for Eph receptors, a family of receptor tyrosine kinases which are crucial for migration, repulsion and adhesion during neuronal, vascular and epithelial development. Binds promiscuously Eph receptors residing on adjacent cells, leading to contact-dependent bidirectional signaling into neighboring cells. Plays an important role in angiogenesis and tumor neovascularization. The recruitment of VAV2, VAV3 and PI3-kinase p85 subunit by phosphorylated EPHA2 is critical for EFNA1-induced RAC1 GTPase activation and vascular endothelial cell migration and assembly. Exerts anti-oncogenic effects in tumor cells through activation and down-regulation of EPHA2. Activates EPHA2 by inducing tyrosine phosphorylation which leads to its internalization and degradation. Acts as a negative regulator in the tumorigenesis of gliomas by down-regulating EPHA2 and FAK. Can evoke collapse of embryonic neuronal growth cone and regulates dendritic spine morphogenesis. The protein is Ephrin-A1 (EFNA1) of Homo sapiens (Human).